Reading from the N-terminus, the 143-residue chain is Putative complexin-1 (143 aa).

Residues 15–71 (NEVTGGLGLKDDGGEKTETGEDPEVVAARLEQEERRKEKHRKMEQEREKMRQGIRDK) are disordered. 2 stretches are compositionally biased toward basic and acidic residues: residues 23–33 (LKDDGGEKTET) and 44–71 (LEQEERRKEKHRKMEQEREKMRQGIRDK). Residues 40 to 71 (VAARLEQEERRKEKHRKMEQEREKMRQGIRDK) adopt a coiled-coil conformation.

Belongs to the complexin/synaphin family.

It is found in the cytoplasm. The protein resides in the cytosol. In terms of biological role, positively regulates a late step in synaptic vesicle exocytosis. The sequence is that of Putative complexin-1 (cpx-1) from Caenorhabditis briggsae.